Here is a 186-residue protein sequence, read N- to C-terminus: NADH dehydrogenase [ubiquinone] 1 beta subcomplex subunit 8, mitochondrial (186 aa).

A mitochondrion-targeting transit peptide spans 1–28 (MAVARAGVLGVQWLQRASRNVMPLGART). A helical membrane pass occupies residues 133-153 (LFGFLAFMIFMCWVGDVYPVY).

It belongs to the complex I NDUFB8 subunit family. Complex I is composed of 45 different subunits.

It is found in the mitochondrion inner membrane. Accessory subunit of the mitochondrial membrane respiratory chain NADH dehydrogenase (Complex I), that is believed not to be involved in catalysis. Complex I functions in the transfer of electrons from NADH to the respiratory chain. The immediate electron acceptor for the enzyme is believed to be ubiquinone. The polypeptide is NADH dehydrogenase [ubiquinone] 1 beta subcomplex subunit 8, mitochondrial (NDUFB8) (Homo sapiens (Human)).